Reading from the N-terminus, the 218-residue chain is ETS domain-containing protein ets-7 (218 aa).

Positions 12–93 (QRLLNFLRGL…KGKDSRYCFL (82 aa)) form a DNA-binding region, ETS. Positions 131–161 (TSNFSLQSSPSSSSNSSSARTMSATSSPTSS) are enriched in low complexity. A disordered region spans residues 131 to 162 (TSNFSLQSSPSSSSNSSSARTMSATSSPTSSL).

This sequence belongs to the ETS family.

It is found in the nucleus. Its function is as follows. Probable transcription factor. Involved in responses to oxidative stress. The sequence is that of ETS domain-containing protein ets-7 from Caenorhabditis elegans.